The chain runs to 453 residues: Pup--protein ligase (453 aa).

Glu9 lines the Mg(2+) pocket. An ATP-binding site is contributed by Arg53. Tyr55 lines the Mg(2+) pocket. The Proton acceptor role is filled by Asp57. Mg(2+) is bound at residue Glu63. ATP-binding residues include Thr66 and Trp420.

Belongs to the Pup ligase/Pup deamidase family. Pup-conjugating enzyme subfamily.

The enzyme catalyses ATP + [prokaryotic ubiquitin-like protein]-L-glutamate + [protein]-L-lysine = ADP + phosphate + N(6)-([prokaryotic ubiquitin-like protein]-gamma-L-glutamyl)-[protein]-L-lysine.. It participates in protein degradation; proteasomal Pup-dependent pathway. It functions in the pathway protein modification; protein pupylation. Its function is as follows. Catalyzes the covalent attachment of the prokaryotic ubiquitin-like protein modifier Pup to the proteasomal substrate proteins, thereby targeting them for proteasomal degradation. This tagging system is termed pupylation. The ligation reaction involves the side-chain carboxylate of the C-terminal glutamate of Pup and the side-chain amino group of a substrate lysine. The sequence is that of Pup--protein ligase from Nocardioides sp. (strain ATCC BAA-499 / JS614).